The following is a 485-amino-acid chain: D-alanine--D-alanyl carrier protein ligase (485 aa).

Residue 144 to 145 participates in ATP binding; that stretch reads TS. Asp-189 provides a ligand contact to D-alanine. 284–289 is an ATP binding site; the sequence is NTYGPT. Residue Val-293 participates in D-alanine binding. Residues Asp-365 and Lys-473 each contribute to the ATP site. Residue Lys-473 coordinates D-alanine.

It belongs to the ATP-dependent AMP-binding enzyme family. DltA subfamily.

It is found in the cytoplasm. The enzyme catalyses holo-[D-alanyl-carrier protein] + D-alanine + ATP = D-alanyl-[D-alanyl-carrier protein] + AMP + diphosphate. It functions in the pathway cell wall biogenesis; lipoteichoic acid biosynthesis. Functionally, catalyzes the first step in the D-alanylation of lipoteichoic acid (LTA), the activation of D-alanine and its transfer onto the D-alanyl carrier protein (Dcp) DltC. In an ATP-dependent two-step reaction, forms a high energy D-alanyl-AMP intermediate, followed by transfer of the D-alanyl residue as a thiol ester to the phosphopantheinyl prosthetic group of the Dcp. D-alanylation of LTA plays an important role in modulating the properties of the cell wall in Gram-positive bacteria, influencing the net charge of the cell wall. This chain is D-alanine--D-alanyl carrier protein ligase, found in Staphylococcus aureus (strain MRSA252).